The sequence spans 150 residues: Azurin (150 aa).

A signal peptide spans 1–21 (MFKQVLGGMALMAAFSAPVLA). A Plastocyanin-like domain is found at 22–150 (AECSVDIAGT…LMKGTLKLVD (129 aa)). A disulfide bridge links cysteine 24 with cysteine 47. Positions 67, 133, 138, and 142 each coordinate Cu cation.

It localises to the periplasm. This chain is Azurin, found in Bordetella bronchiseptica (strain ATCC BAA-588 / NCTC 13252 / RB50) (Alcaligenes bronchisepticus).